The following is a 466-amino-acid chain: Soluble pyridine nucleotide transhydrogenase (466 aa).

Residue E36–C45 participates in FAD binding.

This sequence belongs to the class-I pyridine nucleotide-disulfide oxidoreductase family. As to quaternary structure, homooligomer; probable homooctamer. FAD serves as cofactor.

The protein resides in the cytoplasm. The catalysed reaction is NAD(+) + NADPH = NADH + NADP(+). Conversion of NADPH, generated by peripheral catabolic pathways, to NADH, which can enter the respiratory chain for energy generation. The protein is Soluble pyridine nucleotide transhydrogenase of Escherichia coli O6:H1 (strain CFT073 / ATCC 700928 / UPEC).